A 394-amino-acid chain; its full sequence is Proliferation-associated protein 2G4 (394 aa).

At serine 2 the chain carries N-acetylserine. Residue serine 2 is modified to Phosphoserine. The interval 2–48 (SGEDEQQEQTIAEDLVVTKYKMGGDIANRVLRSLVEASSSGVSVLSL) is necessary for nucleolar localization. Residues 46–54 (LSLCEKGDA) form an RNA-binding region. Residue lysine 298 forms a Glycyl lysine isopeptide (Lys-Gly) (interchain with G-Cter in SUMO2) linkage. Positions 301–394 (LLQPFNVLYE…ETLEENGAGD (94 aa)) are necessary for nucleolar localization. Serine 335 is subject to Phosphoserine. The disordered stretch occupies residues 358-394 (LQSSASRKTQKKKKKKASKTVENATSGETLEENGAGD). Serine 361 is subject to Phosphoserine; by PKC/PRKCD. Positions 361–375 (SASRKTQKKKKKKAS) are interaction with RNA. Residues 365–375 (KTQKKKKKKAS) are compositionally biased toward basic residues. Threonine 366 and threonine 386 each carry phosphothreonine.

Belongs to the peptidase M24 family. In terms of assembly, isoform 2 interacts with the cytoplasmic domain of non-phosphorylated ERBB3; the interaction requires PKC activity. Interacts with AR. Treatment with HRG leads to dissociation from ERBB3 and increases association with AR. Interacts with nucleolin/NCL. Component of a ribonucleoprotein complex containing at least PA2G4, NCL, TOP1, PABPC2, RPLP0, acetylated histone H1 (HIST1H1A or H1F1), histone H1 2/4, RPL4, RPL8, RPL15, RPL18, RPL18A, RPL21, RPL11, RPL12, RPL28, RPL27, RPLP2 and RPL24. Interacts with HDAC2. Interacts with RB1; the interaction is enhanced upon PA2G4 dephosphorylation. Interacts with AKT1. Isoform 1 and isoform 2 interact with RNF20. Isoform 2 interacts with HUWE1. Interacts with DNAJC21. Post-translationally, phosphorylated on serine and threonine residues. Phosphorylation is enhanced by HRG treatment. Basal phosphorylation is PKC-dependent and HRG-induced phosphorylation is predominantly PKC-independent. Phosphorylation at Ser-361 by PKC/PRKCD regulates its nucleolar localization. Isoform 2 is polyubiquitinated, leading to proteasomal degradation and phosphorylation by PKC/PRKCD enhances polyubiquitination. Widely expressed.

It localises to the cytoplasm. Its subcellular location is the nucleus. It is found in the nucleolus. May play a role in a ERBB3-regulated signal transduction pathway. Seems be involved in growth regulation. Acts a corepressor of the androgen receptor (AR) and is regulated by the ERBB3 ligand neuregulin-1/heregulin (HRG). Inhibits transcription of some E2F1-regulated promoters, probably by recruiting histone acetylase (HAT) activity. Binds RNA. Associates with 28S, 18S and 5.8S mature rRNAs, several rRNA precursors and probably U3 small nucleolar RNA. May be involved in regulation of intermediate and late steps of rRNA processing. May be involved in ribosome assembly. Mediates cap-independent translation of specific viral IRESs (internal ribosomal entry site). Together with PTBP1 is required for the translation initiation on the foot-and-mouth disease virus (FMDV) IRES. Regulates cell proliferation, differentiation, and survival. Isoform 1 suppresses apoptosis whereas isoform 2 promotes cell differentiation. In Mus musculus (Mouse), this protein is Proliferation-associated protein 2G4 (Pa2g4).